We begin with the raw amino-acid sequence, 331 residues long: 6-phosphogluconolactonase (331 aa).

It belongs to the cycloisomerase 2 family.

The catalysed reaction is 6-phospho-D-glucono-1,5-lactone + H2O = 6-phospho-D-gluconate + H(+). Its pathway is carbohydrate degradation; pentose phosphate pathway; D-ribulose 5-phosphate from D-glucose 6-phosphate (oxidative stage): step 2/3. Functionally, catalyzes the hydrolysis of 6-phosphogluconolactone to 6-phosphogluconate. The chain is 6-phosphogluconolactonase from Klebsiella pneumoniae (strain 342).